A 462-amino-acid chain; its full sequence is UDP-N-acetylmuramate--L-alanine ligase (462 aa).

ATP is bound at residue Gly-116–Thr-122.

Belongs to the MurCDEF family.

The protein localises to the cytoplasm. The catalysed reaction is UDP-N-acetyl-alpha-D-muramate + L-alanine + ATP = UDP-N-acetyl-alpha-D-muramoyl-L-alanine + ADP + phosphate + H(+). It functions in the pathway cell wall biogenesis; peptidoglycan biosynthesis. Functionally, cell wall formation. The protein is UDP-N-acetylmuramate--L-alanine ligase of Desulforamulus reducens (strain ATCC BAA-1160 / DSM 100696 / MI-1) (Desulfotomaculum reducens).